Here is a 527-residue protein sequence, read N- to C-terminus: Probable feruloyl esterase B-2 (527 aa).

Residues 1 to 19 (MAPIHYLLPIITLGSAALA) form the signal peptide. Cystine bridges form between Cys28–Cys75 and Cys63–Cys114. 5 N-linked (GlcNAc...) asparagine glycosylation sites follow: Asn53, Asn85, Asn98, Asn138, and Asn180. 4 disulfide bridges follow: Cys187/Cys441, Cys256/Cys273, Cys282/Cys291, and Cys503/Cys525. The Acyl-ester intermediate role is filled by Ser188. The Ca(2+) site is built by Asp257, Asp260, Ala262, Asp264, and Ile266. 2 N-linked (GlcNAc...) asparagine glycosylation sites follow: Asn311 and Asn355. Catalysis depends on charge relay system residues Asp400 and His440. N-linked (GlcNAc...) asparagine glycosylation is present at Asn516.

This sequence belongs to the tannase family.

It is found in the secreted. It carries out the reaction feruloyl-polysaccharide + H2O = ferulate + polysaccharide.. Involved in degradation of plant cell walls. Hydrolyzes the feruloyl-arabinose ester bond in arabinoxylans as well as the feruloyl-galactose and feruloyl-arabinose ester bonds in pectin. This chain is Probable feruloyl esterase B-2 (faeB-2), found in Aspergillus terreus (strain NIH 2624 / FGSC A1156).